The sequence spans 278 residues: Urease accessory protein UreD (278 aa).

The protein belongs to the UreD family. In terms of assembly, ureD, UreF and UreG form a complex that acts as a GTP-hydrolysis-dependent molecular chaperone, activating the urease apoprotein by helping to assemble the nickel containing metallocenter of UreC. The UreE protein probably delivers the nickel.

Its subcellular location is the cytoplasm. Required for maturation of urease via the functional incorporation of the urease nickel metallocenter. This chain is Urease accessory protein UreD, found in Blochmanniella pennsylvanica (strain BPEN).